A 300-amino-acid polypeptide reads, in one-letter code: Centromere protein O (300 aa).

Coiled coils occupy residues 18-42 and 83-109; these read LAHL…QSVQ and NQTV…QAYH. Serine 35 is modified (phosphoserine).

The protein belongs to the CENP-O/MCM21 family. In terms of assembly, component of the CENPA-CAD complex, composed of CENPI, CENPK, CENPL, CENPO, CENPP, CENPQ, CENPR and CENPS. The CENPA-CAD complex interacts with the CENPA-NAC complex, at least composed of CENPA, CENPC, CENPH, CENPM, CENPN, CENPT and CENPU.

It is found in the nucleus. The protein resides in the chromosome. It localises to the centromere. Its subcellular location is the kinetochore. Its function is as follows. Component of the CENPA-CAD (nucleosome distal) complex, a complex recruited to centromeres which is involved in assembly of kinetochore proteins, mitotic progression and chromosome segregation. May be involved in incorporation of newly synthesized CENPA into centromeres via its interaction with the CENPA-NAC complex. Modulates the kinetochore-bound levels of NDC80 complex. The sequence is that of Centromere protein O (CENPO) from Homo sapiens (Human).